The chain runs to 539 residues: GMP synthase [glutamine-hydrolyzing] (539 aa).

The Glutamine amidotransferase type-1 domain maps to 4–202; it reads KILILDFGSQ…VLQIAGAKPD (199 aa). The active-site Nucleophile is the cysteine 81. Catalysis depends on residues histidine 176 and glutamate 178. The region spanning 203–395 is the GMPS ATP-PPase domain; that stretch reads WIMKNHIEEA…LGLPPEMVYR (193 aa). 230-236 serves as a coordination point for ATP; it reads SGGVDSS.

Homodimer.

It catalyses the reaction XMP + L-glutamine + ATP + H2O = GMP + L-glutamate + AMP + diphosphate + 2 H(+). The protein operates within purine metabolism; GMP biosynthesis; GMP from XMP (L-Gln route): step 1/1. Catalyzes the synthesis of GMP from XMP. In Burkholderia vietnamiensis (strain G4 / LMG 22486) (Burkholderia cepacia (strain R1808)), this protein is GMP synthase [glutamine-hydrolyzing].